Reading from the N-terminus, the 514-residue chain is Transmembrane protein 117 (514 aa).

The Cytoplasmic portion of the chain corresponds to M1–R15. A helical membrane pass occupies residues M16–S36. The Extracellular portion of the chain corresponds to H37–R65. Residues I66–L86 traverse the membrane as a helical segment. Residues F87–T110 lie on the Cytoplasmic side of the membrane. Residues M111–L131 traverse the membrane as a helical segment. The Extracellular segment spans residues M132–K154. A helical transmembrane segment spans residues L155–M175. Residues L176–R198 are Cytoplasmic-facing. The chain crosses the membrane as a helical span at residues I199–T219. Over D220–R239 the chain is Extracellular. A helical membrane pass occupies residues A240–F260. Topologically, residues P261 to R295 are cytoplasmic. A helical transmembrane segment spans residues I296–L316. Topologically, residues N317 to C394 are extracellular. Residues N353 and N371 are each glycosylated (N-linked (GlcNAc...) asparagine). The helical transmembrane segment at L395–G415 threads the bilayer. Topologically, residues R416–N514 are cytoplasmic. Disordered regions lie at residues K429–D459 and E486–N514. The segment covering S438–I448 has biased composition (basic and acidic residues). Phosphothreonine is present on T453.

The protein belongs to the TMEM117 family.

The protein localises to the cell membrane. Its function is as follows. Involved in endoplasmic reticulum (ER) stress-induced cell death pathway. The protein is Transmembrane protein 117 (TMEM117) of Homo sapiens (Human).